A 136-amino-acid chain; its full sequence is Small ribosomal subunit protein uS9 (136 aa).

It belongs to the universal ribosomal protein uS9 family.

The polypeptide is Small ribosomal subunit protein uS9 (Borrelia recurrentis (strain A1)).